A 26-amino-acid polypeptide reads, in one-letter code: Photosystem II stability/assembly factor HCF136, chloroplastic (26 aa).

This sequence belongs to the Ycf48 family.

It is found in the plastid. The protein localises to the chloroplast thylakoid lumen. Essential for photosystem II (PSII) biogenesis; required for assembly of an early intermediate in PSII assembly that includes D2 (psbD) and cytochrome b559. This Populus euphratica (Euphrates poplar) protein is Photosystem II stability/assembly factor HCF136, chloroplastic.